We begin with the raw amino-acid sequence, 662 residues long: Bifunctional polymyxin resistance protein ArnA (662 aa).

The tract at residues M1–L307 is formyltransferase ArnAFT. H106 (proton donor; for formyltransferase activity) is an active-site residue. (6R)-10-formyltetrahydrofolate-binding positions include R116 and I138 to D142. The interval R316–A662 is dehydrogenase ArnADH. NAD(+)-binding positions include D349 and D370 to I371. UDP-alpha-D-glucuronate is bound by residues A395, Y400, and T434–S435. Residue E436 is the Proton acceptor; for decarboxylase activity of the active site. Residues R462, N493, R527–R536, and Y614 each bind UDP-alpha-D-glucuronate. The Proton donor; for decarboxylase activity role is filled by R620.

It in the N-terminal section; belongs to the Fmt family. UDP-L-Ara4N formyltransferase subfamily. This sequence in the C-terminal section; belongs to the NAD(P)-dependent epimerase/dehydratase family. UDP-glucuronic acid decarboxylase subfamily. In terms of assembly, homohexamer, formed by a dimer of trimers.

It catalyses the reaction UDP-alpha-D-glucuronate + NAD(+) = UDP-beta-L-threo-pentopyranos-4-ulose + CO2 + NADH. The catalysed reaction is UDP-4-amino-4-deoxy-beta-L-arabinose + (6R)-10-formyltetrahydrofolate = UDP-4-deoxy-4-formamido-beta-L-arabinose + (6S)-5,6,7,8-tetrahydrofolate + H(+). Its pathway is nucleotide-sugar biosynthesis; UDP-4-deoxy-4-formamido-beta-L-arabinose biosynthesis; UDP-4-deoxy-4-formamido-beta-L-arabinose from UDP-alpha-D-glucuronate: step 1/3. The protein operates within nucleotide-sugar biosynthesis; UDP-4-deoxy-4-formamido-beta-L-arabinose biosynthesis; UDP-4-deoxy-4-formamido-beta-L-arabinose from UDP-alpha-D-glucuronate: step 3/3. It participates in bacterial outer membrane biogenesis; lipopolysaccharide biosynthesis. Its function is as follows. Bifunctional enzyme that catalyzes the oxidative decarboxylation of UDP-glucuronic acid (UDP-GlcUA) to UDP-4-keto-arabinose (UDP-Ara4O) and the addition of a formyl group to UDP-4-amino-4-deoxy-L-arabinose (UDP-L-Ara4N) to form UDP-L-4-formamido-arabinose (UDP-L-Ara4FN). The modified arabinose is attached to lipid A and is required for resistance to polymyxin and cationic antimicrobial peptides. The sequence is that of Bifunctional polymyxin resistance protein ArnA from Pseudomonas aeruginosa (strain UCBPP-PA14).